We begin with the raw amino-acid sequence, 307 residues long: UDP-3-O-acyl-N-acetylglucosamine deacetylase (307 aa).

Zn(2+) contacts are provided by His-80, His-239, and Asp-243. Catalysis depends on His-266, which acts as the Proton donor.

Belongs to the LpxC family. Requires Zn(2+) as cofactor.

It catalyses the reaction a UDP-3-O-[(3R)-3-hydroxyacyl]-N-acetyl-alpha-D-glucosamine + H2O = a UDP-3-O-[(3R)-3-hydroxyacyl]-alpha-D-glucosamine + acetate. It functions in the pathway glycolipid biosynthesis; lipid IV(A) biosynthesis; lipid IV(A) from (3R)-3-hydroxytetradecanoyl-[acyl-carrier-protein] and UDP-N-acetyl-alpha-D-glucosamine: step 2/6. Its function is as follows. Catalyzes the hydrolysis of UDP-3-O-myristoyl-N-acetylglucosamine to form UDP-3-O-myristoylglucosamine and acetate, the committed step in lipid A biosynthesis. The polypeptide is UDP-3-O-acyl-N-acetylglucosamine deacetylase (Neisseria meningitidis serogroup C (strain 053442)).